A 310-amino-acid chain; its full sequence is Oxygen-dependent coproporphyrinogen-III oxidase (310 aa).

Ser97 lines the substrate pocket. 2 residues coordinate a divalent metal cation: His101 and His111. Catalysis depends on His111, which acts as the Proton donor. Residue 113–115 (NFR) coordinates substrate. 2 residues coordinate a divalent metal cation: His150 and His180. An important for dimerization region spans residues 245 to 280 (YVEFNLLYDRGTRFGLEFGGRTESILMSLPPRVVWR). A substrate-binding site is contributed by 263–265 (GGR).

It belongs to the aerobic coproporphyrinogen-III oxidase family. In terms of assembly, homodimer. It depends on a divalent metal cation as a cofactor.

Its subcellular location is the cytoplasm. The enzyme catalyses coproporphyrinogen III + O2 + 2 H(+) = protoporphyrinogen IX + 2 CO2 + 2 H2O. Its pathway is porphyrin-containing compound metabolism; protoporphyrin-IX biosynthesis; protoporphyrinogen-IX from coproporphyrinogen-III (O2 route): step 1/1. Its function is as follows. Involved in the heme biosynthesis. Catalyzes the aerobic oxidative decarboxylation of propionate groups of rings A and B of coproporphyrinogen-III to yield the vinyl groups in protoporphyrinogen-IX. In Coxiella burnetii (strain RSA 331 / Henzerling II), this protein is Oxygen-dependent coproporphyrinogen-III oxidase.